The chain runs to 83 residues: MSETKIRTLQGVVVSNKMDKSIVVLIERRVKHPMYGKYMTRSTKLKAHDETNVCNEGDLVTITEVAPISKSKNWKLVDVITKA.

This sequence belongs to the universal ribosomal protein uS17 family. In terms of assembly, part of the 30S ribosomal subunit.

In terms of biological role, one of the primary rRNA binding proteins, it binds specifically to the 5'-end of 16S ribosomal RNA. This Colwellia psychrerythraea (strain 34H / ATCC BAA-681) (Vibrio psychroerythus) protein is Small ribosomal subunit protein uS17.